A 427-amino-acid polypeptide reads, in one-letter code: Adenylosuccinate synthetase (427 aa).

Residues 12-18 and 40-42 contribute to the GTP site; these read GDEGKGK and GHT. D13 acts as the Proton acceptor in catalysis. Mg(2+) contacts are provided by D13 and G40. Residues 13–16, 38–41, T128, R142, Q223, T238, and R302 contribute to the IMP site; these read DEGK and NAGH. The active-site Proton donor is H41. 298 to 304 contacts substrate; the sequence is TTTGRPR. GTP is bound by residues R304, 330 to 332, and 412 to 414; these read SID and SVG.

The protein belongs to the adenylosuccinate synthetase family. In terms of assembly, homodimer. The cofactor is Mg(2+).

Its subcellular location is the cytoplasm. The catalysed reaction is IMP + L-aspartate + GTP = N(6)-(1,2-dicarboxyethyl)-AMP + GDP + phosphate + 2 H(+). It participates in purine metabolism; AMP biosynthesis via de novo pathway; AMP from IMP: step 1/2. In terms of biological role, plays an important role in the de novo pathway of purine nucleotide biosynthesis. Catalyzes the first committed step in the biosynthesis of AMP from IMP. The sequence is that of Adenylosuccinate synthetase from Staphylococcus epidermidis (strain ATCC 12228 / FDA PCI 1200).